We begin with the raw amino-acid sequence, 100 residues long: Small ribosomal subunit protein uS14c (100 aa).

The protein belongs to the universal ribosomal protein uS14 family. Part of the 30S ribosomal subunit.

It is found in the plastid. The protein resides in the chloroplast. In terms of biological role, binds 16S rRNA, required for the assembly of 30S particles. The chain is Small ribosomal subunit protein uS14c from Lepidium virginicum (Virginia pepperweed).